Consider the following 160-residue polypeptide: Major pollen allergen Bet v 1-B (160 aa).

Residues lysine 55, tyrosine 82, tyrosine 84, and asparagine 101 each coordinate brassinolide.

The protein belongs to the BetVI family.

The protein resides in the cytoplasm. May be a general steroid carrier protein. The sequence is that of Major pollen allergen Bet v 1-B (BETV1B) from Betula pendula (European white birch).